The sequence spans 520 residues: Interferon lambda receptor 1 (520 aa).

Positions methionine 1–glycine 20 are cleaved as a signal peptide. Residues arginine 21 to alanine 228 lie on the Extracellular side of the membrane. Residues proline 26–alanine 126 form the Fibronectin type-III domain. 2 N-linked (GlcNAc...) asparagine glycosylation sites follow: asparagine 29 and asparagine 36. Intrachain disulfides connect cysteine 74–cysteine 82 and cysteine 86–cysteine 150. N-linked (GlcNAc...) asparagine glycans are attached at residues asparagine 142 and asparagine 169. The cysteines at positions 195 and 217 are disulfide-linked. The chain crosses the membrane as a helical span at residues phenylalanine 229–tryptophan 249. Over lysine 250–arginine 520 the chain is Cytoplasmic. Disordered stretches follow at residues valine 302–glutamate 439 and glutamate 477–arginine 520. The segment covering alanine 323–aspartate 336 has biased composition (acidic residues). A compositionally biased stretch (low complexity) spans serine 380 to serine 392. Acidic residues predominate over residues serine 479–aspartate 495.

The protein belongs to the type II cytokine receptor family. In terms of assembly, heterodimer with IL10RB. Ubiquitinated by FBXO45-containing E3 ligase leading to proteasomal degradation. In terms of tissue distribution, widely expressed.

It localises to the membrane. In terms of biological role, the IFNLR1/IL10RB dimer is a receptor for the cytokine ligands IFNL2 and IFNL3 and mediates their antiviral activity. The ligand/receptor complex stimulate the activation of the JAK/STAT signaling pathway leading to the expression of IFN-stimulated genes (ISG), which contribute to the antiviral state. Determines the cell type specificity of the lambda interferon action. Shows a more restricted pattern of expression in the epithelial tissues thereby limiting responses to lambda interferons primarily to epithelial cells of the respiratory, gastrointestinal, and reproductive tracts. Seems not to be essential for early virus-activated host defense in vaginal infection, but plays an important role in Toll-like receptor (TLR)-induced antiviral defense. Plays a significant role in the antiviral immune defense in the intestinal epithelium. The chain is Interferon lambda receptor 1 (IFNLR1) from Homo sapiens (Human).